Here is a 314-residue protein sequence, read N- to C-terminus: 1-aminocyclopropane-1-carboxylate oxidase 1 (314 aa).

Positions 153–253 (PNFGTKVSNY…RMSIASFYNP (101 aa)) constitute a Fe2OG dioxygenase domain. Fe cation is bound by residues histidine 177, aspartate 179, and histidine 234.

The protein belongs to the iron/ascorbate-dependent oxidoreductase family. In terms of assembly, monomer. Requires Fe cation as cofactor.

It carries out the reaction 1-aminocyclopropane-1-carboxylate + L-ascorbate + O2 = ethene + L-dehydroascorbate + hydrogen cyanide + CO2 + 2 H2O. The protein operates within alkene biosynthesis; ethylene biosynthesis via S-adenosyl-L-methionine; ethylene from S-adenosyl-L-methionine: step 2/2. The protein is 1-aminocyclopropane-1-carboxylate oxidase 1 of Malus domestica (Apple).